Reading from the N-terminus, the 166-residue chain is Thioredoxin, mitochondrial (166 aa).

The N-terminal 59 residues, 1 to 59 (MAQRLLLRRFLTSIISGKPSQSRWAPVASRALQTPQYSPGYLTVTPSQARSIYTTRVCS), are a transit peptide targeting the mitochondrion. The Thioredoxin domain maps to 61–166 (TFNIQDGPDF…LEAFLKKLIG (106 aa)). Catalysis depends on nucleophile residues C90 and C93. The cysteines at positions 90 and 93 are disulfide-linked. An N6-acetyllysine; alternate modification is found at K152. N6-succinyllysine; alternate is present on K152.

Belongs to the thioredoxin family. As to quaternary structure, monomer.

The protein localises to the mitochondrion. Important for the control of mitochondrial reactive oxygen species homeostasis, apoptosis regulation and cell viability. Is involved in various redox reactions including the reduction of protein disulfide bonds, through the reversible oxidation of its active center dithiol to a disulfide. The chain is Thioredoxin, mitochondrial (TXN2) from Bos taurus (Bovine).